The primary structure comprises 351 residues: Phospho-N-acetylmuramoyl-pentapeptide-transferase (351 aa).

Helical transmembrane passes span 17–37 (MAYA…HIIL), 62–82 (GIPT…LVFW), 85–105 (ILNV…FLGF), 124–144 (FKIY…YYFG), 161–181 (IDLG…ASNS), 190–210 (GLAI…AYLT), 230–250 (LVIF…FNAY), 254–274 (IMMG…AALI), 279–299 (ILFS…IIQV), and 328–348 (QVVI…LSTI).

This sequence belongs to the glycosyltransferase 4 family. MraY subfamily. It depends on Mg(2+) as a cofactor.

It is found in the cell inner membrane. The catalysed reaction is UDP-N-acetyl-alpha-D-muramoyl-L-alanyl-gamma-D-glutamyl-meso-2,6-diaminopimeloyl-D-alanyl-D-alanine + di-trans,octa-cis-undecaprenyl phosphate = di-trans,octa-cis-undecaprenyl diphospho-N-acetyl-alpha-D-muramoyl-L-alanyl-D-glutamyl-meso-2,6-diaminopimeloyl-D-alanyl-D-alanine + UMP. Its pathway is cell wall biogenesis; peptidoglycan biosynthesis. Catalyzes the initial step of the lipid cycle reactions in the biosynthesis of the cell wall peptidoglycan: transfers peptidoglycan precursor phospho-MurNAc-pentapeptide from UDP-MurNAc-pentapeptide onto the lipid carrier undecaprenyl phosphate, yielding undecaprenyl-pyrophosphoryl-MurNAc-pentapeptide, known as lipid I. The chain is Phospho-N-acetylmuramoyl-pentapeptide-transferase from Borrelia garinii subsp. bavariensis (strain ATCC BAA-2496 / DSM 23469 / PBi) (Borreliella bavariensis).